An 87-amino-acid polypeptide reads, in one-letter code: MKTKLNELIEFPCVFTYKVMGEAKPELVDLVVEVVQRHAPGDYTPQIKPSSKGNYHSVSITITATHIEQVETLYEELGNIDIVRMVL.

Belongs to the UPF0250 family.

The protein is UPF0250 protein ECA1299 of Pectobacterium atrosepticum (strain SCRI 1043 / ATCC BAA-672) (Erwinia carotovora subsp. atroseptica).